The sequence spans 549 residues: Eukaryotic translation initiation factor 3 subunit D-2 (549 aa).

The segment at 107 to 157 (ARVKGRSGRGPGMLGVAGSMAGGGTTSGSTKYGKGRESRRNQGRRFARNAP) is disordered. Gly residues predominate over residues 114-132 (GRGPGMLGVAGSMAGGGTT). Positions 288–302 (QFDLLTVNETSLEPP) are RNA gate. Residues 527 to 549 (NSFDSDAEDEENSSEPFANSLDN) are disordered. Residues 529-539 (FDSDAEDEENS) show a composition bias toward acidic residues.

The protein belongs to the eIF-3 subunit D family. Component of the eukaryotic translation initiation factor 3 (eIF-3) complex. The eIF-3 complex interacts with pix.

The protein resides in the cytoplasm. Its function is as follows. mRNA cap-binding component of the eukaryotic translation initiation factor 3 (eIF-3) complex, which is involved in protein synthesis of a specialized repertoire of mRNAs and, together with other initiation factors, stimulates binding of mRNA and methionyl-tRNAi to the 40S ribosome. The eIF-3 complex specifically targets and initiates translation of a subset of mRNAs involved in cell proliferation. In the eIF-3 complex, eif3d specifically recognizes and binds the 7-methylguanosine cap of a subset of mRNAs. This Drosophila ananassae (Fruit fly) protein is Eukaryotic translation initiation factor 3 subunit D-2.